Here is a 143-residue protein sequence, read N- to C-terminus: Large ribosomal subunit protein uL15 (143 aa).

The tract at residues 1–51 (MRLNSIAPAPGSRPSAKRVGRGIGSGLGKTAGRGHKGQKARAGGYHKVGFE) is disordered. Residues 21 to 31 (RGIGSGLGKTA) are compositionally biased toward gly residues.

The protein belongs to the universal ribosomal protein uL15 family. In terms of assembly, part of the 50S ribosomal subunit.

In terms of biological role, binds to the 23S rRNA. This chain is Large ribosomal subunit protein uL15, found in Thioalkalivibrio sulfidiphilus (strain HL-EbGR7).